We begin with the raw amino-acid sequence, 490 residues long: Sphingomyelinase (490 aa).

The first 31 residues, 1 to 31, serve as a signal peptide directing secretion; that stretch reads MDYAKRIGQVGALAVVLGVGAAVTTHAIGSA. Residues 30–49 form a disordered region; that stretch reads SAAPTDPSSSSTDSPVDACS. The Periplasmic portion of the chain corresponds to 32-136; that stretch reads APTDPSSSST…FDACDPDGNR (105 aa). A beta stranded membrane pass occupies residues 137 to 145; the sequence is MTFAVRERG. Over 146–161 the chain is Extracellular; it reads APGGPQHGIVTVDQRT. A beta stranded transmembrane segment spans residues 162–168; sequence ASFIYTA. Residues 169 to 171 lie on the Periplasmic side of the membrane; that stretch reads DPG. Residues 172 to 182 traverse the membrane as a beta stranded segment; that stretch reads FVGTDTFSVNV. Over 183–187 the chain is Extracellular; it reads SDDTS. The chain crosses the membrane as a beta stranded span at residues 188–196; the sequence is LHVHGLAGY. The Periplasmic portion of the chain corresponds to 197–204; sequence LGPFHGHD. A beta stranded transmembrane segment spans residues 205–213; it reads DVATVTVFV. At 214-490 the chain is on the extracellular side; sequence GNTPTDTISG…HYVADNVAVR (277 aa).

This sequence belongs to the SpmT family.

The protein resides in the cell outer membrane. The enzyme catalyses a sphingomyelin + H2O = phosphocholine + an N-acylsphing-4-enine + H(+). Its function is as follows. Catalyzes the cleavage of sphingomyelin, a major lipid in eukaryotic cells, into ceramide and phosphocholine, which are then utilized by M.bovis as carbon, nitrogen and phosphorus sources, respectively. Thus, enables M.bovis to utilize sphingomyelin as a source of several essential nutrients for intracellular growth during infection. Furthermore, lyses erythrocytes and constitutes a hemolytic factor. In Mycobacterium bovis (strain ATCC BAA-935 / AF2122/97), this protein is Sphingomyelinase.